The primary structure comprises 284 residues: 4-diphosphocytidyl-2-C-methyl-D-erythritol kinase (284 aa).

K9 is an active-site residue. An ATP-binding site is contributed by 90-100 (PLVSGLGGDSS). The active site involves D132.

This sequence belongs to the GHMP kinase family. IspE subfamily.

It catalyses the reaction 4-CDP-2-C-methyl-D-erythritol + ATP = 4-CDP-2-C-methyl-D-erythritol 2-phosphate + ADP + H(+). The protein operates within isoprenoid biosynthesis; isopentenyl diphosphate biosynthesis via DXP pathway; isopentenyl diphosphate from 1-deoxy-D-xylulose 5-phosphate: step 3/6. In terms of biological role, catalyzes the phosphorylation of the position 2 hydroxy group of 4-diphosphocytidyl-2C-methyl-D-erythritol. This is 4-diphosphocytidyl-2-C-methyl-D-erythritol kinase from Dehalococcoides mccartyi (strain ATCC BAA-2266 / KCTC 15142 / 195) (Dehalococcoides ethenogenes (strain 195)).